A 520-amino-acid polypeptide reads, in one-letter code: Ribonuclease Y (520 aa).

Residues 4–24 (TMFTIISILLSLICLVVGYFV) traverse the membrane as a helical segment. The 64-residue stretch at 210–273 (TVSVVNLPND…ETARIALDKL (64 aa)) folds into the KH domain. The 94-residue stretch at 336–429 (VLKHSIEVAH…VAAADALSAA (94 aa)) folds into the HD domain.

The protein belongs to the RNase Y family.

The protein localises to the cell membrane. Functionally, endoribonuclease that initiates mRNA decay. The protein is Ribonuclease Y of Bacillus pumilus (strain SAFR-032).